Reading from the N-terminus, the 277-residue chain is Co-chaperone protein DjlA (277 aa).

The Periplasmic segment spans residues 1 to 6 (MRYWGK). Residues 7–31 (LLGLVLGVMYAPGVVGALLGLLVGH) traverse the membrane as a helical segment. Residues 32 to 277 (MVDRALGAKR…DLIKREKGFK (246 aa)) lie on the Cytoplasmic side of the membrane. Residues 211–277 (DACKVLGVNS…DLIKREKGFK (67 aa)) enclose the J domain.

Homodimer.

The protein localises to the cell inner membrane. Regulatory DnaK co-chaperone. Direct interaction between DnaK and DjlA is needed for the induction of the wcaABCDE operon, involved in the synthesis of a colanic acid polysaccharide capsule, possibly through activation of the RcsB/RcsC phosphotransfer signaling pathway. The colanic acid capsule may help the bacterium survive conditions outside the host. The protein is Co-chaperone protein DjlA of Yersinia pseudotuberculosis serotype I (strain IP32953).